Reading from the N-terminus, the 495-residue chain is WD repeat-containing protein 37 (495 aa).

2 stretches are compositionally biased toward polar residues: residues Met1–Gln13 and Ser22–Ser31. A disordered region spans residues Met1–Leu50. The span at Glu32–Asp47 shows a compositional bias: basic and acidic residues. WD repeat units follow at residues Gly154–Lys194 and Gly197–Gln236. Residues Pro237–Ser266 are disordered. Over residues Gly246 to Val264 the composition is skewed to acidic residues. WD repeat units follow at residues Ser280–Ser319, Gly322–Val361, Gly366–Ala404, Arg407–Leu446, and Gly453–Glu494.

As to quaternary structure, forms homodimers. Interacts with PACS1. Interacts with PACS2.

The protein resides in the cytoplasm. It localises to the nucleus. In terms of biological role, required for normal ER Ca2+ handling in lymphocytes. Together with PACS1, it plays an essential role in stabilizing peripheral lymphocyte populations. The polypeptide is WD repeat-containing protein 37 (WDR37) (Pongo abelii (Sumatran orangutan)).